Consider the following 216-residue polypeptide: Protein Syd (216 aa).

This sequence belongs to the Syd family.

It localises to the cell inner membrane. Its function is as follows. Interacts with the SecY protein in vivo. May bind preferentially to an uncomplexed state of SecY, thus functioning either as a chelating agent for excess SecY in the cell or as a regulatory factor that negatively controls the translocase function. This chain is Protein Syd, found in Shewanella baltica (strain OS223).